We begin with the raw amino-acid sequence, 477 residues long: Glutamyl-tRNA reductase (477 aa).

Residues 49 to 52 (TCNR), S109, 114 to 116 (EGQ), and Q120 each bind substrate. The Nucleophile role is filled by C50. Position 221–226 (221–226 (GAGSMS)) interacts with NADP(+).

The protein belongs to the glutamyl-tRNA reductase family. Homodimer.

The catalysed reaction is (S)-4-amino-5-oxopentanoate + tRNA(Glu) + NADP(+) = L-glutamyl-tRNA(Glu) + NADPH + H(+). It functions in the pathway porphyrin-containing compound metabolism; protoporphyrin-IX biosynthesis; 5-aminolevulinate from L-glutamyl-tRNA(Glu): step 1/2. Catalyzes the NADPH-dependent reduction of glutamyl-tRNA(Glu) to glutamate 1-semialdehyde (GSA). In Thermobifida fusca (strain YX), this protein is Glutamyl-tRNA reductase.